Reading from the N-terminus, the 98-residue chain is Small ribosomal subunit protein uS19 (98 aa).

The disordered stretch occupies residues 74-98 (FAPTRNYRGHAGGKSEKGGSAPRKK).

The protein belongs to the universal ribosomal protein uS19 family.

Protein S19 forms a complex with S13 that binds strongly to the 16S ribosomal RNA. The protein is Small ribosomal subunit protein uS19 of Chlorobium chlorochromatii (strain CaD3).